A 313-amino-acid polypeptide reads, in one-letter code: Inner membrane ABC transporter permease protein YdcU (313 aa).

Over 1–25 the chain is Cytoplasmic; that stretch reads MAMNVLQSPSRPGLGKVSGFFWHNP. The helical transmembrane segment at 26-46 threads the bilayer; the sequence is GLGLFLLLLGPLMWFGIVYFG. The Periplasmic portion of the chain corresponds to 47-92; that stretch reads SLLTLLWQGFYTFDDFTMSVTPELTLANIRALFNPANYDIILRTLT. An ABC transmembrane type-1 domain is found at 87–302; that stretch reads ILRTLTMAVA…PIILIALYLA (216 aa). A helical transmembrane segment spans residues 93 to 113; that stretch reads MAVAVTIASAILAFPMAWYMA. The Cytoplasmic portion of the chain corresponds to 114-122; the sequence is RYTSGKMKA. A helical membrane pass occupies residues 123–143; it reads FFYIAVMLPMWASYIVKAYAW. The Periplasmic portion of the chain corresponds to 144–154; the sequence is TLLLAKDGVAQ. A helical transmembrane segment spans residues 155–175; that stretch reads WFLQHLGLEPLLTAFLTLPAV. Over 176–187 the chain is Cytoplasmic; that stretch reads GGNTLSTSGLGR. The helical transmembrane segment at 188 to 208 threads the bilayer; the sequence is FLVFLYIWLPFMILPVQAALE. Residues 209 to 230 are Periplasmic-facing; that stretch reads RLPPSLLQASADLGARPRQTFR. Residues 231–251 traverse the membrane as a helical segment; that stretch reads YVVLPLAIPGIAAGSIFTFSL. Position 252 (Thr252) is a topological domain, cytoplasmic. The chain crosses the membrane as a helical span at residues 253 to 273; the sequence is LGDFIVPQLVGPPGYFIGNMV. Residues 274 to 283 are Periplasmic-facing; that stretch reads YSQQGAIGNM. A helical membrane pass occupies residues 284-304; it reads PMAAAFTLVPIILIALYLAFV. Topologically, residues 305–313 are cytoplasmic; that stretch reads KRLGAFDAL.

It belongs to the binding-protein-dependent transport system permease family. CysTW subfamily.

It is found in the cell inner membrane. Its function is as follows. Probably part of the ABC transporter complex YdcSTUV. Probably responsible for the translocation of the substrate across the membrane. In Escherichia coli (strain K12), this protein is Inner membrane ABC transporter permease protein YdcU (ydcU).